A 272-amino-acid polypeptide reads, in one-letter code: Phosphate import ATP-binding protein PstB (272 aa).

One can recognise an ABC transporter domain in the interval 26 to 267 (LEIRNLDLRY…PKKRKTEDYI (242 aa)). ATP is bound at residue 58–65 (GPSGCGKS).

The protein belongs to the ABC transporter superfamily. Phosphate importer (TC 3.A.1.7) family. As to quaternary structure, the complex is composed of two ATP-binding proteins (PstB), two transmembrane proteins (PstC and PstA) and a solute-binding protein (PstS).

Its subcellular location is the cell inner membrane. The enzyme catalyses phosphate(out) + ATP + H2O = ADP + 2 phosphate(in) + H(+). In terms of biological role, part of the ABC transporter complex PstSACB involved in phosphate import. Responsible for energy coupling to the transport system. The sequence is that of Phosphate import ATP-binding protein PstB from Shewanella frigidimarina (strain NCIMB 400).